The following is a 515-amino-acid chain: Bifunctional purine biosynthesis protein PurH (515 aa).

The 145-residue stretch at 1–145 (MTKRALISVS…KNHASVTVVV (145 aa)) folds into the MGS-like domain.

It belongs to the PurH family.

It carries out the reaction (6R)-10-formyltetrahydrofolate + 5-amino-1-(5-phospho-beta-D-ribosyl)imidazole-4-carboxamide = 5-formamido-1-(5-phospho-D-ribosyl)imidazole-4-carboxamide + (6S)-5,6,7,8-tetrahydrofolate. The catalysed reaction is IMP + H2O = 5-formamido-1-(5-phospho-D-ribosyl)imidazole-4-carboxamide. It functions in the pathway purine metabolism; IMP biosynthesis via de novo pathway; 5-formamido-1-(5-phospho-D-ribosyl)imidazole-4-carboxamide from 5-amino-1-(5-phospho-D-ribosyl)imidazole-4-carboxamide (10-formyl THF route): step 1/1. It participates in purine metabolism; IMP biosynthesis via de novo pathway; IMP from 5-formamido-1-(5-phospho-D-ribosyl)imidazole-4-carboxamide: step 1/1. The protein is Bifunctional purine biosynthesis protein PurH of Streptococcus pyogenes serotype M3 (strain ATCC BAA-595 / MGAS315).